The sequence spans 129 residues: Large ribosomal subunit protein uL22 (129 aa).

The protein belongs to the universal ribosomal protein uL22 family. Part of the 50S ribosomal subunit.

This protein binds specifically to 23S rRNA; its binding is stimulated by other ribosomal proteins, e.g. L4, L17, and L20. It is important during the early stages of 50S assembly. It makes multiple contacts with different domains of the 23S rRNA in the assembled 50S subunit and ribosome. Functionally, the globular domain of the protein is located near the polypeptide exit tunnel on the outside of the subunit, while an extended beta-hairpin is found that lines the wall of the exit tunnel in the center of the 70S ribosome. The chain is Large ribosomal subunit protein uL22 from Metamycoplasma hominis (strain ATCC 23114 / DSM 25592 / NBRC 14850 / NCTC 10111 / PG21) (Mycoplasma hominis).